A 486-amino-acid chain; its full sequence is PTS system N-acetylmuramic acid-specific EIIBC component (486 aa).

In terms of domain architecture, PTS EIIB type-1 spans 1-89; sequence MAKITQTMIS…NKLIESVING (89 aa). The Phosphocysteine intermediate; for EIIB activity role is filled by C28. The PTS EIIC type-1 domain occupies 127 to 486; it reads SKFATIFTPL…FFGSKDVDLS (360 aa). A run of 10 helical transmembrane segments spans residues 129–149, 170–190, 196–216, 230–250, 268–288, 312–332, 347–367, 381–401, 411–431, and 453–473; these read FATIFTPLIPGFIAAGLLLGF, LIAYMKVFGKGLFAFLSILIG, AFGGSGVNGAILASLFVLGYN, FFGYTIDPRGNIIGVLLAAII, MILTSVVTLLIMGVITFVVIM, AAILAGLFLISVVFGIHQGFV, LFPILAMAGGGQVGASLALYF, GAIIPGILGIGEPLIYGVTLP, IGGAAGGFFIGLVSYLGLPVG, and IFAGMAVFVVGLLISYVVGFL.

It localises to the cell inner membrane. It catalyses the reaction N-acetyl-beta-D-muramate(out) + N(pros)-phospho-L-histidyl-[protein] = N-acetyl-beta-D-muramate 6-phosphate(in) + L-histidyl-[protein]. Its function is as follows. The phosphoenolpyruvate-dependent sugar phosphotransferase system (sugar PTS), a major carbohydrate active transport system, catalyzes the phosphorylation of incoming sugar substrates concomitantly with their translocation across the cell membrane. This system is involved in N-acetylmuramic acid (MurNAc) transport, yielding cytoplasmic MurNAc-6-P. Is also able to take up anhydro-N-acetylmuramic acid (anhMurNAc), but cannot phosphorylate the carbon 6, probably because of the 1,6-anhydro ring. The chain is PTS system N-acetylmuramic acid-specific EIIBC component (murP) from Vibrio vulnificus (strain CMCP6).